The following is a 452-amino-acid chain: CCA-adding enzyme (452 aa).

ATP is bound by residues S54 and R57. Residues S54 and R57 each contribute to the CTP site. Positions 66, 68, and 117 each coordinate Mg(2+). 3 residues coordinate ATP: H140, K160, and Y169. 3 residues coordinate CTP: H140, K160, and Y169.

This sequence belongs to the tRNA nucleotidyltransferase/poly(A) polymerase family. Archaeal CCA-adding enzyme subfamily. In terms of assembly, homodimer. Mg(2+) serves as cofactor.

The catalysed reaction is a tRNA precursor + 2 CTP + ATP = a tRNA with a 3' CCA end + 3 diphosphate. It catalyses the reaction a tRNA with a 3' CCA end + 2 CTP + ATP = a tRNA with a 3' CCACCA end + 3 diphosphate. Functionally, catalyzes the addition and repair of the essential 3'-terminal CCA sequence in tRNAs without using a nucleic acid template. Adds these three nucleotides in the order of C, C, and A to the tRNA nucleotide-73, using CTP and ATP as substrates and producing inorganic pyrophosphate. tRNA 3'-terminal CCA addition is required both for tRNA processing and repair. Also involved in tRNA surveillance by mediating tandem CCA addition to generate a CCACCA at the 3' terminus of unstable tRNAs. While stable tRNAs receive only 3'-terminal CCA, unstable tRNAs are marked with CCACCA and rapidly degraded. In Halobacterium salinarum (strain ATCC 29341 / DSM 671 / R1), this protein is CCA-adding enzyme.